A 237-amino-acid chain; its full sequence is Phosphoribosylaminoimidazole-succinocarboxamide synthase (237 aa).

It belongs to the SAICAR synthetase family.

It catalyses the reaction 5-amino-1-(5-phospho-D-ribosyl)imidazole-4-carboxylate + L-aspartate + ATP = (2S)-2-[5-amino-1-(5-phospho-beta-D-ribosyl)imidazole-4-carboxamido]succinate + ADP + phosphate + 2 H(+). The protein operates within purine metabolism; IMP biosynthesis via de novo pathway; 5-amino-1-(5-phospho-D-ribosyl)imidazole-4-carboxamide from 5-amino-1-(5-phospho-D-ribosyl)imidazole-4-carboxylate: step 1/2. The chain is Phosphoribosylaminoimidazole-succinocarboxamide synthase from Proteus mirabilis (strain HI4320).